The sequence spans 397 residues: Ribosomal RNA large subunit methyltransferase I (397 aa).

Residues 2-80 enclose the PUA domain; it reads AIRIKLKPGR…KEEAIDADFF (79 aa).

The protein belongs to the methyltransferase superfamily. RlmI family.

It is found in the cytoplasm. It catalyses the reaction cytidine(1962) in 23S rRNA + S-adenosyl-L-methionine = 5-methylcytidine(1962) in 23S rRNA + S-adenosyl-L-homocysteine + H(+). In terms of biological role, specifically methylates the cytosine at position 1962 (m5C1962) of 23S rRNA. In Shewanella denitrificans (strain OS217 / ATCC BAA-1090 / DSM 15013), this protein is Ribosomal RNA large subunit methyltransferase I.